The following is a 172-amino-acid chain: Adenine phosphoribosyltransferase (172 aa).

It belongs to the purine/pyrimidine phosphoribosyltransferase family. As to quaternary structure, homodimer.

Its subcellular location is the cytoplasm. The enzyme catalyses AMP + diphosphate = 5-phospho-alpha-D-ribose 1-diphosphate + adenine. It functions in the pathway purine metabolism; AMP biosynthesis via salvage pathway; AMP from adenine: step 1/1. Its function is as follows. Catalyzes a salvage reaction resulting in the formation of AMP, that is energically less costly than de novo synthesis. This chain is Adenine phosphoribosyltransferase, found in Streptococcus mutans serotype c (strain ATCC 700610 / UA159).